The following is a 170-amino-acid chain: MPTKSIKIMVEGGNVKPGPPLAPTLSQLGLNVGEVVKKLNEATSSFKGMSVPVTIEVDSNTKKYEIKVGIPTTTALLLKEAGVSEPSGDPAHKKIGNLSLEQVIKIAIMKKPGLTTKSLKAAVKSMLGTAKSIGVTVENKDPKELVKEVEEGKYDDLLAKYENEWNEVKE.

Belongs to the universal ribosomal protein uL11 family. As to quaternary structure, part of the ribosomal stalk of the 50S ribosomal subunit. Interacts with L10 and the large rRNA to form the base of the stalk. L10 forms an elongated spine to which L12 dimers bind in a sequential fashion forming a multimeric L10(L12)X complex.

In terms of biological role, forms part of the ribosomal stalk which helps the ribosome interact with GTP-bound translation factors. The chain is Large ribosomal subunit protein uL11 from Saccharolobus islandicus (strain M.14.25 / Kamchatka #1) (Sulfolobus islandicus).